A 257-amino-acid chain; its full sequence is Cobalt transport protein CbiM (257 aa).

The N-terminal stretch at 1 to 33 is a signal peptide; the sequence is MVKPTQAKRYASLGAIALLTTSLVVASPNPALA. Transmembrane regions (helical) follow at residues 39 to 59, 74 to 94, 117 to 137, 138 to 158, 171 to 191, and 214 to 234; these read GFLPLGWAVGWWLAFLPFLAW, SVLLVALAGAYAFVVSSLKIP, LMAVLGTLVLLFQSLLIAHGG, LTTLGANAFSMAVVGPWLAWL, AIALFAASFISNVGTYTLTSL, and LFAVTQIPLAISEGLLTVLVW.

Belongs to the CbiM family. As to quaternary structure, forms an energy-coupling factor (ECF) transporter complex composed of an ATP-binding protein (A component, CbiO), a transmembrane protein (T component, CbiQ) and 2 possible substrate-capture proteins (S components, CbiM and CbiN) of unknown stoichimetry.

The protein resides in the cell inner membrane. It participates in cofactor biosynthesis; adenosylcobalamin biosynthesis. Functionally, part of the energy-coupling factor (ECF) transporter complex CbiMNOQ involved in cobalt import. The chain is Cobalt transport protein CbiM from Thermosynechococcus vestitus (strain NIES-2133 / IAM M-273 / BP-1).